Reading from the N-terminus, the 152-residue chain is Ribonuclease H (152 aa).

Positions 1 to 142 constitute an RNase H type-1 domain; that stretch reads MNSKVVIYTD…ADKLAVQGRE (142 aa). Asp10, Glu48, Asp70, and Asp134 together coordinate Mg(2+).

This sequence belongs to the RNase H family. In terms of assembly, monomer. Mg(2+) serves as cofactor.

The protein localises to the cytoplasm. It carries out the reaction Endonucleolytic cleavage to 5'-phosphomonoester.. Endonuclease that specifically degrades the RNA of RNA-DNA hybrids. This Rickettsia akari (strain Hartford) protein is Ribonuclease H.